The chain runs to 557 residues: Urocanate hydratase (557 aa).

NAD(+) contacts are provided by residues 52–53, Gln130, 176–178, Glu196, Arg201, 242–243, 263–267, 273–274, and Tyr322; these read GG, GMG, NA, QTSAH, and YL. Cys410 is a catalytic residue. Gly492 provides a ligand contact to NAD(+).

This sequence belongs to the urocanase family. The cofactor is NAD(+).

The protein resides in the cytoplasm. The enzyme catalyses 4-imidazolone-5-propanoate = trans-urocanate + H2O. It functions in the pathway amino-acid degradation; L-histidine degradation into L-glutamate; N-formimidoyl-L-glutamate from L-histidine: step 2/3. Catalyzes the conversion of urocanate to 4-imidazolone-5-propionate. The sequence is that of Urocanate hydratase from Pseudoalteromonas translucida (strain TAC 125).